The sequence spans 218 residues: Peptide methionine sulfoxide reductase MsrA (218 aa).

The tract at residues M1–P28 is disordered. The active site involves C57.

It belongs to the MsrA Met sulfoxide reductase family.

The catalysed reaction is L-methionyl-[protein] + [thioredoxin]-disulfide + H2O = L-methionyl-(S)-S-oxide-[protein] + [thioredoxin]-dithiol. It catalyses the reaction [thioredoxin]-disulfide + L-methionine + H2O = L-methionine (S)-S-oxide + [thioredoxin]-dithiol. Its function is as follows. Has an important function as a repair enzyme for proteins that have been inactivated by oxidation. Catalyzes the reversible oxidation-reduction of methionine sulfoxide in proteins to methionine. The protein is Peptide methionine sulfoxide reductase MsrA of Brucella anthropi (strain ATCC 49188 / DSM 6882 / CCUG 24695 / JCM 21032 / LMG 3331 / NBRC 15819 / NCTC 12168 / Alc 37) (Ochrobactrum anthropi).